The primary structure comprises 223 residues: Imidazoleglycerol-phosphate dehydratase (223 aa).

Belongs to the imidazoleglycerol-phosphate dehydratase family.

It carries out the reaction D-erythro-1-(imidazol-4-yl)glycerol 3-phosphate = 3-(imidazol-4-yl)-2-oxopropyl phosphate + H2O. It functions in the pathway amino-acid biosynthesis; L-histidine biosynthesis; L-histidine from 5-phospho-alpha-D-ribose 1-diphosphate: step 6/9. This is Imidazoleglycerol-phosphate dehydratase (HIS3) from Torulaspora delbrueckii (Yeast).